Reading from the N-terminus, the 279-residue chain is Oxygen-dependent coproporphyrinogen-III oxidase (279 aa).

Residue S102 participates in substrate binding. A divalent metal cation-binding residues include H106 and H116. H116 serves as the catalytic Proton donor. 118 to 120 (NTR) contributes to the substrate binding site. A divalent metal cation contacts are provided by H149 and H179. An important for dimerization region spans residues 244–279 (YVEFNLLYDRGTKFGLMTDGNVEAILMSLPPVVKFN).

Belongs to the aerobic coproporphyrinogen-III oxidase family. As to quaternary structure, homodimer. Requires a divalent metal cation as cofactor.

It localises to the cytoplasm. The enzyme catalyses coproporphyrinogen III + O2 + 2 H(+) = protoporphyrinogen IX + 2 CO2 + 2 H2O. It participates in porphyrin-containing compound metabolism; protoporphyrin-IX biosynthesis; protoporphyrinogen-IX from coproporphyrinogen-III (O2 route): step 1/1. Functionally, involved in the heme biosynthesis. Catalyzes the aerobic oxidative decarboxylation of propionate groups of rings A and B of coproporphyrinogen-III to yield the vinyl groups in protoporphyrinogen-IX. This Rickettsia prowazekii (strain Madrid E) protein is Oxygen-dependent coproporphyrinogen-III oxidase.